Reading from the N-terminus, the 348-residue chain is Calcium homeostasis modulator protein 1 (348 aa).

Residues 1-20 (MDKFRMIFQFLQSNQESFMN) are Cytoplasmic-facing. The tract at residues 9–36 (QFLQSNQESFMNGICGIMALASAQMYSA) is central pore. Residues 21–36 (GICGIMALASAQMYSA) traverse the membrane as a helical segment. Topologically, residues 37–48 (FDFNCPCLPGYN) are extracellular. 2 disulfide bridges follow: cysteine 41-cysteine 126 and cysteine 43-cysteine 160. Residues 49 to 71 (VVYSLGILLTPPLVLFLLGLVMN) traverse the membrane as a helical segment. A phospholipid-binding region spans residues 62 to 69 (VLFLLGLV). Residues 72–98 (NNISMLAEEWKRPAGRRAKDPAVLRYM) lie on the Cytoplasmic side of the membrane. A helical membrane pass occupies residues 99 to 124 (FCSMAQRALIAPVVWVAVTLLDGKCF). The S-palmitoyl cysteine moiety is linked to residue cysteine 100. A phospholipid-binding region spans residues 104–116 (QRALIAPVVWVAV). Residues 125 to 179 (LCAFCTAVPVATLGNGSLVPGLPAPELARLLARVPCPEIYDGNWLLAREVAVRYL) lie on the Extracellular side of the membrane. Residue asparagine 139 is glycosylated (N-linked (GlcNAc...) asparagine). A helical transmembrane segment spans residues 180–205 (RCISQALGWSFVLLTTLLAFVVRSVR). Positions 191-201 (VLLTTLLAFVV) are phospholipid-binding. Residues 206–348 (PCFTQVAFLK…KEVATYFSKV (143 aa)) lie on the Cytoplasmic side of the membrane. Cysteine 207 is lipidated: S-palmitoyl cysteine. Residues 324 to 348 (LMSNGWAGGEPRPPRKEVATYFSKV) form a disordered region.

This sequence belongs to the CALHM family. In terms of assembly, oligomerizes to form hexamers and octamers. Does not form gap junctions. Associates with CALHM3 as a pore-forming subunit in a hetero-hexameric channel complex. In terms of processing, N-glycosylated. Assembly with CALHM3 is associated with N-glycan remodeling and formation of hybrid complex- and high mannose-type glycochains. This N-glycan processing regulates channel trafficking and gating kinetics. Palmitoylated by ZDHHC3, ZDHHC20 and possibly ZDHHC7. Palmitoylation regulates voltage-dependent gating of the channel by shifting it toward more depolarized potentials. In terms of tissue distribution, specifically expressed in type II taste bud cells (at protein level). Not expressed in brain.

Its subcellular location is the cell membrane. The protein resides in the endoplasmic reticulum membrane. The protein localises to the basolateral cell membrane. The catalysed reaction is ATP(in) = ATP(out). The enzyme catalyses Ca(2+)(in) = Ca(2+)(out). It catalyses the reaction Mg(2+)(in) = Mg(2+)(out). It carries out the reaction Na(+)(in) = Na(+)(out). The catalysed reaction is K(+)(in) = K(+)(out). The enzyme catalyses Li(+)(in) = Li(+)(out). It catalyses the reaction Rb(+)(in) = Rb(+)(out). It carries out the reaction Cs(+)(in) = Cs(+)(out). The catalysed reaction is chloride(in) = chloride(out). Regulated by membrane voltage and extracellular Ca(2+). Inhibited by Gd(3+), ruthenium red, and Zn(2+) and partially inhibited by 2-aminoethoxydiphenyl borate. Its function is as follows. Pore-forming subunit of gustatory voltage-gated ion channels required for sensory perception of sweet, bitter and umami tastes. With CALHM3 forms a fast-activating voltage-gated ATP-release channel in type II taste bud cells, ATP acting as a neurotransmitter to activate afferent neural gustatory pathways. Acts both as a voltage-gated and calcium-activated ion channel: mediates neuronal excitability in response to membrane depolarization and low extracellular Ca(2+) concentration. Has poor ion selectivity and forms a wide pore (around 14 Angstroms) that mediates permeation of small ions including Ca(2+), Na(+), K(+) and Cl(-), as well as larger ions such as ATP(4-). Mediates Ca(2+) influx and downstream activation of the ERK1 and ERK2 cascade in neurons. Triggers endoplasmic reticulum stress by reducing the calcium content of the endoplasmic reticulum. May indirectly control amyloid precursor protein (APP) proteolysis and aggregated amyloid-beta (Abeta) peptides levels in a Ca(2+) dependent manner. The protein is Calcium homeostasis modulator protein 1 of Mus musculus (Mouse).